A 410-amino-acid polypeptide reads, in one-letter code: Serine hydroxymethyltransferase (410 aa).

Residues Leu-119 and 123 to 125 each bind (6S)-5,6,7,8-tetrahydrofolate; that span reads GHL. N6-(pyridoxal phosphate)lysine is present on Lys-228. 351–353 contacts (6S)-5,6,7,8-tetrahydrofolate; it reads SPF.

Belongs to the SHMT family. Homodimer. Pyridoxal 5'-phosphate serves as cofactor.

The protein localises to the cytoplasm. The catalysed reaction is (6R)-5,10-methylene-5,6,7,8-tetrahydrofolate + glycine + H2O = (6S)-5,6,7,8-tetrahydrofolate + L-serine. It participates in one-carbon metabolism; tetrahydrofolate interconversion. It functions in the pathway amino-acid biosynthesis; glycine biosynthesis; glycine from L-serine: step 1/1. Functionally, catalyzes the reversible interconversion of serine and glycine with tetrahydrofolate (THF) serving as the one-carbon carrier. This reaction serves as the major source of one-carbon groups required for the biosynthesis of purines, thymidylate, methionine, and other important biomolecules. Also exhibits THF-independent aldolase activity toward beta-hydroxyamino acids, producing glycine and aldehydes, via a retro-aldol mechanism. This is Serine hydroxymethyltransferase from Clostridium perfringens (strain ATCC 13124 / DSM 756 / JCM 1290 / NCIMB 6125 / NCTC 8237 / Type A).